A 278-amino-acid chain; its full sequence is Ubiquinone biosynthesis protein COQ4, mitochondrial (278 aa).

A mitochondrion-targeting transit peptide spans 1-28; sequence MATPTSVRIAGFRSLQALCAQRTVTRNF. 4 residues coordinate Zn(2+): His-164, Asp-165, His-168, and Glu-180.

Belongs to the COQ4 family. Component of a multi-subunit COQ enzyme complex, composed of at least COQ3, COQ4, COQ5, COQ6, COQ7 and COQ9. It depends on Zn(2+) as a cofactor.

The protein localises to the mitochondrion inner membrane. The enzyme catalyses a 4-hydroxy-3-methoxy-5-(all-trans-polyprenyl)benzoate + H(+) = a 2-methoxy-6-(all-trans-polyprenyl)phenol + CO2. The protein operates within cofactor biosynthesis; ubiquinone biosynthesis. In terms of biological role, lyase that catalyzes the C1-decarboxylation of 4-hydroxy-3-methoxy-5-(all-trans-polyprenyl)benzoic acid into 2-methoxy-6-(all-trans-polyprenyl)phenol during ubiquinone biosynthesis. The polypeptide is Ubiquinone biosynthesis protein COQ4, mitochondrial (Uncinocarpus reesii (strain UAMH 1704)).